Here is a 249-residue protein sequence, read N- to C-terminus: Phosphate import ATP-binding protein PstB (249 aa).

Positions 3-244 (IEANDVHVYY…PKKKRTQNYI (242 aa)) constitute an ABC transporter domain. 35–42 (GPSGCGKS) is a binding site for ATP.

Belongs to the ABC transporter superfamily. Phosphate importer (TC 3.A.1.7) family. The complex is composed of two ATP-binding proteins (PstB), two transmembrane proteins (PstC and PstA) and a solute-binding protein (PstS).

It localises to the cell inner membrane. The enzyme catalyses phosphate(out) + ATP + H2O = ADP + 2 phosphate(in) + H(+). Functionally, part of the ABC transporter complex PstSACB involved in phosphate import. Responsible for energy coupling to the transport system. This Cytophaga hutchinsonii (strain ATCC 33406 / DSM 1761 / CIP 103989 / NBRC 15051 / NCIMB 9469 / D465) protein is Phosphate import ATP-binding protein PstB.